Reading from the N-terminus, the 357-residue chain is Inositol-tetrakisphosphate 1-kinase 3 (357 aa).

Residues Lys56 and Lys98 each coordinate 1D-myo-inositol 1,3,4-trisphosphate. 2 residues coordinate ATP: Arg133 and Lys183. Positions 190 and 222 each coordinate 1D-myo-inositol 1,3,4-trisphosphate. ATP contacts are provided by residues 211-222 (QEFVNHGGVLFK), Ser237, and Ser262. Residues Asp302, Asp317, and Asn319 each coordinate Mg(2+). Asn319 contacts 1D-myo-inositol 1,3,4-trisphosphate.

This sequence belongs to the ITPK1 family. Monomer. It depends on Mg(2+) as a cofactor.

The catalysed reaction is 1D-myo-inositol 3,4,5,6-tetrakisphosphate + ATP = 1D-myo-inositol 1,3,4,5,6-pentakisphosphate + ADP + H(+). The enzyme catalyses 1D-myo-inositol 1,3,4-trisphosphate + ATP = 1D-myo-inositol 1,3,4,5-tetrakisphosphate + ADP + H(+). It carries out the reaction 1D-myo-inositol 1,3,4-trisphosphate + ATP = 1D-myo-inositol 1,3,4,6-tetrakisphosphate + ADP + H(+). Kinase that can phosphorylate various inositol polyphosphate such as Ins(3,4,5,6)P4 or Ins(1,3,4)P3 and participates in phytic acid biosynthesis in developing seeds. Phytic acid is the primary storage form of phosphorus in cereal grains and other plant seeds. The polypeptide is Inositol-tetrakisphosphate 1-kinase 3 (ITPK3) (Oryza sativa subsp. indica (Rice)).